Here is a 144-residue protein sequence, read N- to C-terminus: Succinate dehydrogenase cytochrome b560 subunit (144 aa).

3 consecutive transmembrane segments (helical) span residues 40–60 (IFHR…ILIL), 84–104 (GFLF…HLFA), and 124–144 (LTGY…WIIF). Heme is bound at residue H101.

This sequence belongs to the cytochrome b560 family. As to quaternary structure, forms part of complex II containing four subunits: a 70 kDa flavoprotein (FP), a 27 kDa iron-sulfur protein (IP), a cytochrome B and a membrane-anchoring protein. Requires heme as cofactor.

The protein localises to the mitochondrion inner membrane. Its pathway is carbohydrate metabolism; tricarboxylic acid cycle. Functionally, membrane-anchoring subunit of succinate dehydrogenase (SDH) that is involved in complex II of the mitochondrial electron transport chain and is responsible for transferring electrons from succinate to ubiquinone (coenzyme Q). This Reclinomonas americana protein is Succinate dehydrogenase cytochrome b560 subunit (SDH3).